We begin with the raw amino-acid sequence, 946 residues long: Bifunctional lysine-specific demethylase and histidyl-hydroxylase NO66 (946 aa).

Residues Tyr-14–Val-435 are disordered. Composition is skewed to polar residues over residues Ser-17–Thr-28 and Ala-37–Ser-46. The span at Ser-59–Ser-73 shows a compositional bias: low complexity. A compositionally biased stretch (polar residues) spans Thr-99–Glu-110. The segment covering Glu-117–Gly-128 has biased composition (basic and acidic residues). Over residues Thr-169–Arg-186 the composition is skewed to polar residues. Residues Glu-187 to Gly-198 are compositionally biased toward basic and acidic residues. The span at Thr-239–Arg-256 shows a compositional bias: polar residues. The segment covering Glu-257–Gly-268 has biased composition (basic and acidic residues). Thr-309 is modified (phosphothreonine). A compositionally biased stretch (polar residues) spans Thr-309–Glu-327. Positions Ser-328–Gly-338 are enriched in basic and acidic residues. The residue at position 339 (Ser-339) is a Phosphoserine. Over residues Thr-379–Glu-397 the composition is skewed to polar residues. Over residues Ser-398 to Gly-408 the composition is skewed to basic and acidic residues. The span at Arg-416 to Asn-433 shows a compositional bias: polar residues. Residues Asn-606–Val-742 form the JmjC domain. Residues His-646, Asp-648, and His-708 each contribute to the Fe cation site.

The protein belongs to the ROX family. NO66 subfamily. Fe(2+) serves as cofactor.

Its subcellular location is the nucleus. It catalyses the reaction N(6),N(6)-dimethyl-L-lysyl(36)-[histone H3] + 2 2-oxoglutarate + 2 O2 = L-lysyl(36)-[histone H3] + 2 formaldehyde + 2 succinate + 2 CO2. Oxygenase that can act as both a histone lysine demethylase and a ribosomal histidine hydroxylase. Specifically demethylates 'Lys-4' (H3K4me) and 'Lys-36' (H3K36me) of histone H3, thereby playing a central role in histone code. The polypeptide is Bifunctional lysine-specific demethylase and histidyl-hydroxylase NO66 (Drosophila pseudoobscura pseudoobscura (Fruit fly)).